The primary structure comprises 470 residues: UDP-glycosyltransferase 75C1 (470 aa).

Residue H16 is the Proton acceptor of the active site. An anthocyanidin is bound at residue H16. UDP-alpha-D-glucose contacts are provided by Q347, H362, W365, N366, S367, E370, D386, and Q387.

The protein belongs to the UDP-glycosyltransferase family. In terms of tissue distribution, expressed in flowers and fruits, especially in pulp, and, at lower levels, in seeds.

The protein resides in the cytoplasm. The protein localises to the nucleus. The enzyme catalyses 2-cis-(+)-abscisate + UDP-alpha-D-glucose = beta-D-glucopyranosyl cis-(+)-abscisate + UDP. The catalysed reaction is (indol-3-yl)acetate + UDP-alpha-D-glucose = 1-O-(indol-3-ylacetyl)-beta-D-glucose + UDP. In terms of biological role, glucosyltransferase acting on both abscisic acid (ABA) and auxin (IAA). Required for ABA-mediated fruit ripening, seed germination, and negative responses to drought. This Solanum lycopersicum (Tomato) protein is UDP-glycosyltransferase 75C1.